The following is a 342-amino-acid chain: Dihydroorotase (342 aa).

Zn(2+) contacts are provided by H13 and H15. Substrate is bound by residues 15–17 (HLR) and N41. The Zn(2+) site is built by K97, H134, and H172. At K97 the chain carries N6-carboxylysine. H134 lines the substrate pocket. L217 provides a ligand contact to substrate. Residue D245 participates in Zn(2+) binding. D245 is a catalytic residue. H249 and A261 together coordinate substrate.

The protein belongs to the metallo-dependent hydrolases superfamily. DHOase family. Class II DHOase subfamily. In terms of assembly, homodimer. The cofactor is Zn(2+).

It carries out the reaction (S)-dihydroorotate + H2O = N-carbamoyl-L-aspartate + H(+). It participates in pyrimidine metabolism; UMP biosynthesis via de novo pathway; (S)-dihydroorotate from bicarbonate: step 3/3. In terms of biological role, catalyzes the reversible cyclization of carbamoyl aspartate to dihydroorotate. This is Dihydroorotase from Shewanella loihica (strain ATCC BAA-1088 / PV-4).